The following is a 223-amino-acid chain: MALRSLTLLCAAAGASAGAIELTPDNFDELVLKSGKAAFIKFLAPWUGHCKKMKPDWDSLASTFEDSKKVLIADVDCTTGGKPLCEKYGVRGYPTIKYFNPPDEEGEDYKGGRSLDELKKFAENELGPGCSVDLMDNCSEEQKGKLKEYIDMAPEKRTEMLETLKKELADAESTHEALLKELQATYKESMDKLEKLKEESAPKIKLLKAATPAPKAEGAKDEV.

The N-terminal stretch at Met1–Ala17 is a signal peptide. Residues Gly18–Glu125 form the Thioredoxin domain. Sec47 is a non-standard amino acid (selenocysteine). The stretch at Glu155–Ala201 forms a coiled coil. Positions Ala201–Val223 are disordered. Low complexity predominate over residues Lys203–Ala216. The Prevents secretion from ER motif lies at Lys220–Val223.

It belongs to the protein disulfide isomerase family.

The protein localises to the endoplasmic reticulum lumen. This Emiliania huxleyi (Coccolithophore) protein is Protein disulfide-isomerase-like protein EhSep2 (SEP2).